Reading from the N-terminus, the 285-residue chain is MKADNPFDLLLPAAMAKVAEEAGVYKATKHPLKTFYLAITAGVFISIAFVFYITATTGTGTMPFGMAKLVGGICFSLGLILCVVCGADLFTSTVLIVVAKASGRITWGQLAKNWLNVYFGNLVGALLFVLLMWLSGEYMTANGQWGLNVLQTADHKVHHTFIEAVCLGILANLMVCLAVWMSYSGRSLMDKAFIMVLPVAMFVASGFEHSIANMFMIPMGIVIRDFASPEFWTAVGSAPENFSHLTVMNFITDNLIPVTIGNIIGGGLLVGLTYWVIYLRENDHH.

Over 1–30 (MKADNPFDLLLPAAMAKVAEEAGVYKATKH) the chain is Cytoplasmic. Residues 31-56 (PLKTFYLAITAGVFISIAFVFYITAT) form a helical membrane-spanning segment. The Periplasmic segment spans residues 57 to 64 (TGTGTMPF). A helical membrane pass occupies residues 65-85 (GMAKLVGGICFSLGLILCVVC). The Cytoplasmic segment spans residues 86–112 (GADLFTSTVLIVVAKASGRITWGQLAK). Residues 113 to 135 (NWLNVYFGNLVGALLFVLLMWLS) form a helical membrane-spanning segment. Residues 136–160 (GEYMTANGQWGLNVLQTADHKVHHT) are Periplasmic-facing. Residues 161–181 (FIEAVCLGILANLMVCLAVWM) form a helical membrane-spanning segment. Residues 182 to 187 (SYSGRS) are Cytoplasmic-facing. The helical transmembrane segment at 188–205 (LMDKAFIMVLPVAMFVAS) threads the bilayer. The Periplasmic portion of the chain corresponds to 206–249 (GFEHSIANMFMIPMGIVIRDFASPEFWTAVGSAPENFSHLTVMN). The chain crosses the membrane as a helical span at residues 250–276 (FITDNLIPVTIGNIIGGGLLVGLTYWV). Over 277-285 (IYLRENDHH) the chain is Cytoplasmic.

It belongs to the FNT transporter (TC 1.A.16) family. Homopentamer.

It is found in the cell inner membrane. The catalysed reaction is formate(in) = formate(out). Involved in the bidirectional transport of formate during mixed-acid fermentation. Functions to maintain relatively constant intracellular formate levels during growth, using different mechanisms for efflux and uptake of the anion. Is impermeable to water. The polypeptide is Formate channel FocA (Escherichia coli O157:H7).